The following is a 262-amino-acid chain: Pyridoxine 5'-phosphate synthase (262 aa).

Residue Asn-6 coordinates 3-amino-2-oxopropyl phosphate. Position 8 to 9 (8 to 9 (DH)) interacts with 1-deoxy-D-xylulose 5-phosphate. Arg-17 contacts 3-amino-2-oxopropyl phosphate. The Proton acceptor role is filled by His-41. 1-deoxy-D-xylulose 5-phosphate is bound by residues Arg-43 and His-48. The active-site Proton acceptor is Glu-68. 1-deoxy-D-xylulose 5-phosphate is bound at residue Thr-98. Catalysis depends on His-210, which acts as the Proton donor. 3-amino-2-oxopropyl phosphate contacts are provided by residues Gly-211 and 232 to 233 (GQ).

The protein belongs to the PNP synthase family. In terms of assembly, homooctamer; tetramer of dimers.

The protein resides in the cytoplasm. The catalysed reaction is 3-amino-2-oxopropyl phosphate + 1-deoxy-D-xylulose 5-phosphate = pyridoxine 5'-phosphate + phosphate + 2 H2O + H(+). The protein operates within cofactor biosynthesis; pyridoxine 5'-phosphate biosynthesis; pyridoxine 5'-phosphate from D-erythrose 4-phosphate: step 5/5. In terms of biological role, catalyzes the complicated ring closure reaction between the two acyclic compounds 1-deoxy-D-xylulose-5-phosphate (DXP) and 3-amino-2-oxopropyl phosphate (1-amino-acetone-3-phosphate or AAP) to form pyridoxine 5'-phosphate (PNP) and inorganic phosphate. The chain is Pyridoxine 5'-phosphate synthase from Campylobacter jejuni subsp. jejuni serotype O:23/36 (strain 81-176).